The primary structure comprises 265 residues: 3-methyl-2-oxobutanoate hydroxymethyltransferase (265 aa).

Residues Asp-44 and Asp-83 each coordinate Mg(2+). 3-methyl-2-oxobutanoate-binding positions include 44–45 (DS), Asp-83, and Lys-113. Residue Glu-115 participates in Mg(2+) binding. Glu-182 (proton acceptor) is an active-site residue.

This sequence belongs to the PanB family. As to quaternary structure, homodecamer; pentamer of dimers. Mg(2+) serves as cofactor.

It is found in the cytoplasm. It carries out the reaction 3-methyl-2-oxobutanoate + (6R)-5,10-methylene-5,6,7,8-tetrahydrofolate + H2O = 2-dehydropantoate + (6S)-5,6,7,8-tetrahydrofolate. It functions in the pathway cofactor biosynthesis; (R)-pantothenate biosynthesis; (R)-pantoate from 3-methyl-2-oxobutanoate: step 1/2. Catalyzes the reversible reaction in which hydroxymethyl group from 5,10-methylenetetrahydrofolate is transferred onto alpha-ketoisovalerate to form ketopantoate. The polypeptide is 3-methyl-2-oxobutanoate hydroxymethyltransferase (Aquifex aeolicus (strain VF5)).